Reading from the N-terminus, the 230-residue chain is Endonuclease NucS (230 aa).

The protein belongs to the NucS endonuclease family.

Its subcellular location is the cytoplasm. Functionally, cleaves both 3' and 5' ssDNA extremities of branched DNA structures. The chain is Endonuclease NucS from Corynebacterium glutamicum (strain R).